Here is a 130-residue protein sequence, read N- to C-terminus: Small ribosomal subunit protein uS9 (130 aa).

Belongs to the universal ribosomal protein uS9 family.

The chain is Small ribosomal subunit protein uS9 from Histophilus somni (strain 129Pt) (Haemophilus somnus).